Reading from the N-terminus, the 182-residue chain is Adenylate kinase (182 aa).

12–17 (GAGKGT) provides a ligand contact to ATP. Positions 32-61 (STGDLLRDEVSSGSVLGIKAAEIMNKGELV) are NMP. AMP is bound by residues threonine 33, arginine 38, 59 to 61 (ELV), 85 to 88 (GFPR), and glutamine 92. An LID region spans residues 126–132 (ERGRQDD). Arginine 127 is a binding site for ATP. Arginine 129 and arginine 140 together coordinate AMP. Position 168 (alanine 168) interacts with ATP.

This sequence belongs to the adenylate kinase family. In terms of assembly, monomer.

The protein localises to the cytoplasm. It catalyses the reaction AMP + ATP = 2 ADP. The protein operates within purine metabolism; AMP biosynthesis via salvage pathway; AMP from ADP: step 1/1. In terms of biological role, catalyzes the reversible transfer of the terminal phosphate group between ATP and AMP. Plays an important role in cellular energy homeostasis and in adenine nucleotide metabolism. In Prochlorococcus marinus (strain NATL1A), this protein is Adenylate kinase.